The chain runs to 356 residues: 5-formaminoimidazole-4-carboxamide-1-(beta)-D-ribofuranosyl 5'-monophosphate synthetase (356 aa).

5-amino-1-(5-phospho-beta-D-ribosyl)imidazole-4-carboxamide-binding residues include histidine 27 and serine 94. An ATP-grasp domain is found at 101–333 (TENFADMAVP…YADLMEENLS (233 aa)). ATP contacts are provided by residues 145-196 (PHDI…TRYY) and glutamate 226. Asparagine 255 contributes to the 5-amino-1-(5-phospho-beta-D-ribosyl)imidazole-4-carboxamide binding site. Mg(2+)-binding residues include glutamate 293 and glutamate 306.

Belongs to the phosphohexose mutase family. The cofactor is Mg(2+). Requires Mn(2+) as cofactor.

It carries out the reaction 5-amino-1-(5-phospho-beta-D-ribosyl)imidazole-4-carboxamide + formate + ATP = 5-formamido-1-(5-phospho-D-ribosyl)imidazole-4-carboxamide + ADP + phosphate. It participates in purine metabolism; IMP biosynthesis via de novo pathway; 5-formamido-1-(5-phospho-D-ribosyl)imidazole-4-carboxamide from 5-amino-1-(5-phospho-D-ribosyl)imidazole-4-carboxamide (formate route): step 1/1. Functionally, catalyzes the ATP- and formate-dependent formylation of 5-aminoimidazole-4-carboxamide-1-beta-d-ribofuranosyl 5'-monophosphate (AICAR) to 5-formaminoimidazole-4-carboxamide-1-beta-d-ribofuranosyl 5'-monophosphate (FAICAR) in the absence of folates. This chain is 5-formaminoimidazole-4-carboxamide-1-(beta)-D-ribofuranosyl 5'-monophosphate synthetase, found in Methanosarcina barkeri (strain Fusaro / DSM 804).